The sequence spans 121 residues: Apoptin (121 aa).

Disordered stretches follow at residues 1–28 (MNAL…LETP) and 57–121 (LRSA…RIRL). Residues 58 to 70 (RSATADNSESTGF) show a composition bias toward polar residues. A compositionally biased stretch (basic and acidic residues) spans 88–102 (RSCDPSEYRVSELKE).

Belongs to the gyrovirus apoptin family.

The protein localises to the host nucleus. Its function is as follows. May act as transcriptional regulator. Induces apoptosis in infected cells. Element of infectious replication cycle. The protein is Apoptin (VP3) of Gallus gallus (Chicken).